Here is a 311-residue protein sequence, read N- to C-terminus: MARPQPCGPPHARCGSPSLPERPLQVKVVGLFSCPNFQIAKSAAENLKNNHPSKFEDPILVPLQEFAWHQYLQEKKRELKNETWEYSSSVISFVNGQFLGDALDLQKWAHEVWDIVDIKPSALYDALTEDFSAKFLRDTKHDFVFLDICIDSSPIGRLIFELYCDVCPKTCKNFQVLCTGKAGFSQRGIRLHYKNSIFHRIVQNGWIQGGDIVYGKGDNGESIYGPTFEDENFSVPHNKRGVLGMANKGRHSNGSQFYITLQATPYLDRKFVAFGQLIEGTEVLKQLELVPTQNERPIHMCRITDSGDPYA.

The 164-residue stretch at 145–308 (FLDICIDSSP…HMCRITDSGD (164 aa)) folds into the PPIase cyclophilin-type domain.

Belongs to the cyclophilin-type PPIase family.

Functionally, probable inactive PPIase with no peptidyl-prolyl cis-trans isomerase activity. This chain is Probable inactive peptidyl-prolyl cis-trans isomerase-like 6, found in Homo sapiens (Human).